The primary structure comprises 309 residues: Phytoene synthase (309 aa).

The protein belongs to the phytoene/squalene synthase family. Requires ATP as cofactor. It depends on Mn(2+) as a cofactor. The cofactor is Mg(2+).

The protein operates within carotenoid biosynthesis; phytoene biosynthesis. Its function is as follows. Involved in the biosynthesis of carotenoids. Catalyzes the condensation of two molecules of geranylgeranyl diphosphate (GGPP) to give prephytoene diphosphate (PPPP) and the subsequent rearrangement of the cyclopropylcarbinyl intermediate to yield phytoene. This is Phytoene synthase (crtB) from Pseudescherichia vulneris (Escherichia vulneris).